Here is a 600-residue protein sequence, read N- to C-terminus: CoA ligase FVEG_12633 (600 aa).

ATP-binding positions include 170–174, histidine 214, 321–323, and 342–343; these read TSGTT, AAL, and ER. The segment at 241-342 is SBD1; the sequence is NSVWTRLAAP…QLTGGNVLLE (102 aa). The tract at residues 343–420 is SBD2; it reads RYGMTEVGMA…LRGPTVFTGY (78 aa). Substrate is bound at residue methionine 346. Residues threonine 347, aspartate 441, arginine 471, and lysine 564 each contribute to the ATP site. Oxalate is bound at residue lysine 564.

This sequence belongs to the ATP-dependent AMP-binding enzyme family.

In terms of biological role, coA ligase; part of the Fusarium detoxification of benzoxazolinone cluster 2 (FDB2) involved in the degradation of benzoxazolinones produced by the host plant. Maize, wheat, and rye produce the 2 benzoxazinone phytoanticipins 2,4-dihy-droxy-7-methoxy-1,4-benzoxazin-3-one (DIMBOA) and 2,4-dihydroxy-1,4-benzoxazin-3-one (DIBOA) that, due to their inherent instability once released, spontaneously degrade to the more stable corresponding benzoxazolinones, 6-methoxy-2-benzoxazolinone (MBOA) and 2-benzoxazolinone (BOA), respectively. The first step in the detoxification of benzoxazolinones involves the hydrolysis of the cyclic ester bond of benzoxazolinones by the FDB1 cluster gamma-lactamase MBL1 to aminophenols. MBL1 is able to convert BOA into 2-aminophenol (2-AP), as well as MBOA into 5-methoxy-2-aminophenol (2-AMP). The FDB2 cluster N-malonyltransferase FDB2/NAT1 then metabolizes aminophenols via N-malonylation to non-toxic malonamic acids. FDB2/NAT1 converts 2-AP into N-(2-hydroxyphenyl) malonamic acid (HPMA) and 2-AMP into N-(2-hydroxy-4-methoxyphenyl) malonamic acid (HMPMA). The duplicated dienlactone hydrolases DLH1 and DLH2 may provide redundant function for hydrolyzing the lactone moiety in the BOA molecule. The roles of the amidases an other enzymes encoded by the 2 FDB clusters have not been identified so far. The sequence is that of CoA ligase FVEG_12633 from Gibberella moniliformis (strain M3125 / FGSC 7600) (Maize ear and stalk rot fungus).